We begin with the raw amino-acid sequence, 410 residues long: ORC1-type DNA replication protein 4 (410 aa).

Residues Thr73–Leu77, Tyr220, and Arg232 contribute to the ATP site.

The protein belongs to the CDC6/cdc18 family.

Functionally, involved in regulation of DNA replication. The polypeptide is ORC1-type DNA replication protein 4 (orc4) (Halobacterium salinarum (strain ATCC 700922 / JCM 11081 / NRC-1) (Halobacterium halobium)).